A 360-amino-acid chain; its full sequence is Decorin (360 aa).

A signal peptide spans 1–16; the sequence is MKATIIFFLVAQVSWA. A propeptide spanning residues 17 to 30 is cleaved from the precursor; that stretch reads GPFQQKGLFDFMLE. O-linked (Xyl...) (glycosaminoglycan) serine glycosylation is present at serine 34. 2 disulfide bridges follow: cysteine 55-cysteine 61 and cysteine 59-cysteine 68. LRR repeat units lie at residues 74–94, 95–118, 119–142, 143–163, 164–187, 188–213, 214–234, 235–258, 259–282, 283–305, 306–335, and 336–360; these read EKVPKDLPPDTALLDLQNNKI, TEIKDGDFKNLKNLHTLILINNKI, SKISPGAFAPLVKLERLYLSKNQL, KELPEKMPKTLQELRVHENEI, TKVRKSVFNGLNQMIVVELGTNPL, KSSGIENGAFQGMKKLSYIRIADTNI, TTIPQGLPPSLTELHLDGNKI, TKVDAASLKGLNNLAKLGLSFNSI, SAVDNGSLANTPHLRELHLNNNKL, VKVPGGLADHKYIQVVYLHNNNI, SAIGSNDFCPPGYNTKKASYSGVSLFSNPV, and QYWEIQPSTFRCVYVRAAVQLGNYK. A glycan (N-linked (GlcNAc...) asparagine) is linked at asparagine 212. N-linked (GlcNAc...) asparagine glycosylation is found at asparagine 263 and asparagine 304. Residues cysteine 314 and cysteine 347 are joined by a disulfide bond.

It belongs to the small leucine-rich proteoglycan (SLRP) family. SLRP class I subfamily. As to quaternary structure, binds to type I and type II collagen, fibronectin and TGF-beta. Forms a ternary complex with MFAP2 and ELN. Interacts with DPT. Post-translationally, the attached glycosaminoglycan chain can be either chondroitin sulfate or dermatan sulfate depending upon the tissue of origin.

The protein localises to the secreted. The protein resides in the extracellular space. Its subcellular location is the extracellular matrix. Its function is as follows. May affect the rate of fibrils formation. The sequence is that of Decorin (DCN) from Ovis aries (Sheep).